A 384-amino-acid chain; its full sequence is S-adenosylmethionine synthase (384 aa).

His15 lines the ATP pocket. Residue Asp17 coordinates Mg(2+). Glu43 is a K(+) binding site. Glu56 and Gln99 together coordinate L-methionine. The interval 99–109 (QSPDINQGVDK) is flexible loop. ATP is bound by residues 164–166 (DAK), 230–231 (RF), Asp239, 245–246 (RK), Ala262, and Lys266. Asp239 serves as a coordination point for L-methionine. Lys270 serves as a coordination point for L-methionine.

Belongs to the AdoMet synthase family. As to quaternary structure, homotetramer; dimer of dimers. The cofactor is Mg(2+). Requires K(+) as cofactor.

It is found in the cytoplasm. It carries out the reaction L-methionine + ATP + H2O = S-adenosyl-L-methionine + phosphate + diphosphate. It participates in amino-acid biosynthesis; S-adenosyl-L-methionine biosynthesis; S-adenosyl-L-methionine from L-methionine: step 1/1. Functionally, catalyzes the formation of S-adenosylmethionine (AdoMet) from methionine and ATP. The overall synthetic reaction is composed of two sequential steps, AdoMet formation and the subsequent tripolyphosphate hydrolysis which occurs prior to release of AdoMet from the enzyme. This Vibrio parahaemolyticus serotype O3:K6 (strain RIMD 2210633) protein is S-adenosylmethionine synthase.